A 1278-amino-acid polypeptide reads, in one-letter code: SMC5-SMC6 complex localization factor protein 2 (1278 aa).

4 disordered regions span residues methionine 1–arginine 235, glutamate 248–glutamate 337, arginine 443–histidine 491, and glutamate 509–lysine 582. The span at lysine 39–serine 50 shows a compositional bias: basic and acidic residues. Over residues serine 94 to arginine 103 the composition is skewed to basic residues. Basic and acidic residues-rich tracts occupy residues glycine 118–arginine 133, leucine 156–lysine 174, glutamate 180–lysine 199, and glutamate 248–glutamate 258. Polar residues-rich tracts occupy residues glutamine 259–serine 277 and serine 318–asparagine 329. 2 stretches are compositionally biased toward basic and acidic residues: residues lysine 449–lysine 463 and lysine 469–isoleucine 489. Positions alanine 519–alanine 540 are enriched in polar residues. Residue serine 591 is modified to Phosphoserine. 3 disordered regions span residues proline 598–glutamate 724, arginine 739–tyrosine 764, and isoleucine 798–aspartate 820. Residues proline 609–lysine 630 are compositionally biased toward basic and acidic residues. 3 stretches are compositionally biased toward low complexity: residues serine 643–serine 654, proline 666–serine 675, and serine 688–alanine 697. The segment covering aspartate 707–glutamate 724 has biased composition (acidic residues). 3 positions are modified to phosphoserine: serine 708, serine 712, and serine 719. The interaction with SIMC1 stretch occupies residues threonine 740–serine 1278. Residues threonine 769 to histidine 1271 form an NSE6-like domain region. Residues proline 807 to serine 1278 form a required for interaction with SLF1 and RAD18 region.

The protein belongs to the FAM178 family. In terms of assembly, forms a heterodimer with SIMC1. Interacts with SLF1 (via N-terminus); this interaction links RAD18 to the SMC5-SMC6 complex. Interacts with RAD18; this interaction is increased in a SLF1-dependent manner. Interacts with SMC5 and SMC6.

The protein localises to the nucleus. It is found in the PML body. In terms of biological role, plays a role in the DNA damage response (DDR) pathway by regulating postreplication repair of UV-damaged DNA and genomic stability maintenance. The SLF1-SLF2 complex acts to link RAD18 with the SMC5-SMC6 complex at replication-coupled interstrand cross-links (ICL) and DNA double-strand breaks (DSBs) sites on chromatin during DNA repair in response to stalled replication forks. Promotes the recruitment of the SMC5-SMC6 complex to DNA lesions. May play a role in SMC5-SMC6 complex recruitment for viral restriction. Forms a complex with SIMC1 and this complex is required to recruit SMC5-SMC6 complex to PML nuclear bodies and sites of viral replication. In Mus musculus (Mouse), this protein is SMC5-SMC6 complex localization factor protein 2.